We begin with the raw amino-acid sequence, 166 residues long: Salivary acidic proline-rich phosphoprotein 1/2 (166 aa).

The signal sequence occupies residues 1–16; sequence MLLILLSVALLAFSSA. Residues 16–166 form a disordered region; the sequence is AQDLDEDVSQ…QGPPQGQSPQ (151 aa). The residue at position 17 (Gln-17) is a Pyrrolidone carboxylic acid. An inhibits hydroxyapatite formation, binds to hydroxyapatite and calcium region spans residues 17–46; the sequence is QDLDEDVSQEDVPLVISDGGDSEQFIDEER. Ser-24 carries the post-translational modification Phosphoserine; by FAM20C. Ser-33 bears the Phosphoserine; alternate mark. Residues Ser-33 and Ser-38 are each glycosylated (O-linked (GlcA) serine; alternate). Ser-38 carries the phosphoserine; by FAM20C; alternate modification. Composition is skewed to low complexity over residues 48-61 and 68-82; these read GPPL…PSAG and GPQQ…QQQQ. 2 stretches are compositionally biased toward pro residues: residues 83 to 111 and 137 to 159; these read GPPP…PQGP.

Post-translationally, proteolytically cleaved; PRP-2, PRP-1, PIF-S and Db-S yield PRP-4, PRP-3 (protein A), PIF-F and Db-F, respectively. In terms of processing, a hexuronic acid was shown to be linked to Ser-33 in about 40% of the polypeptides. Neither the structure of the carbohydrate (whether glucuronic acid or an isomer of), nor the linkage (whether a glycoside or an ester) has been definitely established.

Its subcellular location is the secreted. PRP's act as highly potent inhibitors of crystal growth of calcium phosphates. They provide a protective and reparative environment for dental enamel which is important for the integrity of the teeth. The sequence is that of Salivary acidic proline-rich phosphoprotein 1/2 (PRH1) from Homo sapiens (Human).